Reading from the N-terminus, the 88-residue chain is Beta-insect excitatory toxin BmKIT1 (88 aa).

Residues 1–18 (MKFFLIFLVIFPIMGVLG) form the signal peptide. The 64-residue stretch at 20 to 83 (KNGYAVDSSG…IKDATKSYCD (64 aa)) folds into the LCN-type CS-alpha/beta domain. 4 disulfides stabilise this stretch: cysteine 34/cysteine 55, cysteine 40/cysteine 60, cysteine 44/cysteine 62, and cysteine 56/cysteine 82. Residue isoleucine 87 is modified to Isoleucine amide.

The protein belongs to the long (4 C-C) scorpion toxin superfamily. Sodium channel inhibitor family. Beta subfamily. In terms of tissue distribution, expressed by the venom gland.

It is found in the secreted. Its function is as follows. Excitatory insect beta-toxins induce a spastic paralysis. They bind voltage-independently at site-4 of sodium channels (Nav) and shift the voltage of activation toward more negative potentials thereby affecting sodium channel activation and promoting spontaneous and repetitive firing. This toxin is active only on insects. The chain is Beta-insect excitatory toxin BmKIT1 from Olivierus martensii (Manchurian scorpion).